A 545-amino-acid chain; its full sequence is ATP synthase subunit alpha (545 aa).

172–179 (GDRKTGKT) is a binding site for ATP.

The protein belongs to the ATPase alpha/beta chains family. As to quaternary structure, F-type ATPases have 2 components, CF(1) - the catalytic core - and CF(0) - the membrane proton channel. CF(1) has five subunits: alpha(3), beta(3), gamma(1), delta(1), epsilon(1). CF(0) has three main subunits: a(1), b(2) and c(9-12). The alpha and beta chains form an alternating ring which encloses part of the gamma chain. CF(1) is attached to CF(0) by a central stalk formed by the gamma and epsilon chains, while a peripheral stalk is formed by the delta and b chains.

It is found in the cell membrane. The enzyme catalyses ATP + H2O + 4 H(+)(in) = ADP + phosphate + 5 H(+)(out). Its function is as follows. Produces ATP from ADP in the presence of a proton gradient across the membrane. The alpha chain is a regulatory subunit. This is ATP synthase subunit alpha from Nocardia farcinica (strain IFM 10152).